The following is a 341-amino-acid chain: MTDADPTLRPDPLPEDNDRALRPQALDEFIGQAEARANLRIFVQSARQRGEAMDHTLFHGPPGLGKTTLAQIMARELGVNFRMTSGPVLAKAGDLAAILTNLEARDVLFIDEIHRLNPAVEEVLYPAMEDFELDLVIGDGPAARTVRIELQPFTLVGATTRMGLLTTPLRDRFGIPTRLLFYTVDELFEIVSRNARKLGAPAEEAGAREIARRARGTPRIAGRLLRRVVDFAVVEGDGRITRELADHALTRLGVDQLGLDGADRRYLRLIAENYSGGPVGIETLSAALSESRDSLEEVIEPYLLQQGLIQRTPRGRMLAQKAWTHLGLDAPRPPGQSDLFG.

The interval methionine 1–tyrosine 182 is large ATPase domain (RuvB-L). ATP is bound by residues leucine 21, arginine 22, glycine 63, lysine 66, threonine 67, threonine 68, glutamate 129–phenylalanine 131, arginine 172, tyrosine 182, and arginine 219. Threonine 67 lines the Mg(2+) pocket. The interval threonine 183–glycine 253 is small ATPAse domain (RuvB-S). Residues glutamine 256–glycine 341 form a head domain (RuvB-H) region. Positions 292, 311, and 316 each coordinate DNA.

Belongs to the RuvB family. As to quaternary structure, homohexamer. Forms an RuvA(8)-RuvB(12)-Holliday junction (HJ) complex. HJ DNA is sandwiched between 2 RuvA tetramers; dsDNA enters through RuvA and exits via RuvB. An RuvB hexamer assembles on each DNA strand where it exits the tetramer. Each RuvB hexamer is contacted by two RuvA subunits (via domain III) on 2 adjacent RuvB subunits; this complex drives branch migration. In the full resolvosome a probable DNA-RuvA(4)-RuvB(12)-RuvC(2) complex forms which resolves the HJ.

The protein resides in the cytoplasm. The enzyme catalyses ATP + H2O = ADP + phosphate + H(+). The RuvA-RuvB-RuvC complex processes Holliday junction (HJ) DNA during genetic recombination and DNA repair, while the RuvA-RuvB complex plays an important role in the rescue of blocked DNA replication forks via replication fork reversal (RFR). RuvA specifically binds to HJ cruciform DNA, conferring on it an open structure. The RuvB hexamer acts as an ATP-dependent pump, pulling dsDNA into and through the RuvAB complex. RuvB forms 2 homohexamers on either side of HJ DNA bound by 1 or 2 RuvA tetramers; 4 subunits per hexamer contact DNA at a time. Coordinated motions by a converter formed by DNA-disengaged RuvB subunits stimulates ATP hydrolysis and nucleotide exchange. Immobilization of the converter enables RuvB to convert the ATP-contained energy into a lever motion, pulling 2 nucleotides of DNA out of the RuvA tetramer per ATP hydrolyzed, thus driving DNA branch migration. The RuvB motors rotate together with the DNA substrate, which together with the progressing nucleotide cycle form the mechanistic basis for DNA recombination by continuous HJ branch migration. Branch migration allows RuvC to scan DNA until it finds its consensus sequence, where it cleaves and resolves cruciform DNA. This chain is Holliday junction branch migration complex subunit RuvB, found in Ruegeria pomeroyi (strain ATCC 700808 / DSM 15171 / DSS-3) (Silicibacter pomeroyi).